Consider the following 209-residue polypeptide: Pyridoxal 5'-phosphate synthase subunit PdxT (209 aa).

Residue 58 to 60 (GES) coordinates L-glutamine. The active-site Nucleophile is Cys90. Residues Arg119 and 148–149 (IR) each bind L-glutamine. Residues His185 and Glu187 each act as charge relay system in the active site.

It belongs to the glutaminase PdxT/SNO family. In terms of assembly, in the presence of PdxS, forms a dodecamer of heterodimers. Only shows activity in the heterodimer.

The catalysed reaction is aldehydo-D-ribose 5-phosphate + D-glyceraldehyde 3-phosphate + L-glutamine = pyridoxal 5'-phosphate + L-glutamate + phosphate + 3 H2O + H(+). It catalyses the reaction L-glutamine + H2O = L-glutamate + NH4(+). It participates in cofactor biosynthesis; pyridoxal 5'-phosphate biosynthesis. Its function is as follows. Catalyzes the hydrolysis of glutamine to glutamate and ammonia as part of the biosynthesis of pyridoxal 5'-phosphate. The resulting ammonia molecule is channeled to the active site of PdxS. The polypeptide is Pyridoxal 5'-phosphate synthase subunit PdxT (Clavibacter sepedonicus (Clavibacter michiganensis subsp. sepedonicus)).